A 430-amino-acid polypeptide reads, in one-letter code: Adenylosuccinate synthetase (430 aa).

GTP contacts are provided by residues 12 to 18 (GDEGKGK) and 40 to 42 (GHT). The active-site Proton acceptor is Asp13. Residues Asp13 and Gly40 each contribute to the Mg(2+) site. IMP is bound by residues 13–16 (DEGK), 38–41 (NAGH), Thr128, Arg142, Gln223, Thr238, and Arg302. The active-site Proton donor is the His41. 298-304 (TTTGRPR) contacts substrate. Residues Arg304, 330-332 (SID), and 413-415 (SVG) contribute to the GTP site.

The protein belongs to the adenylosuccinate synthetase family. In terms of assembly, homodimer. Requires Mg(2+) as cofactor.

It localises to the cytoplasm. It carries out the reaction IMP + L-aspartate + GTP = N(6)-(1,2-dicarboxyethyl)-AMP + GDP + phosphate + 2 H(+). The protein operates within purine metabolism; AMP biosynthesis via de novo pathway; AMP from IMP: step 1/2. Its function is as follows. Plays an important role in the de novo pathway of purine nucleotide biosynthesis. Catalyzes the first committed step in the biosynthesis of AMP from IMP. The polypeptide is Adenylosuccinate synthetase (Lactococcus lactis subsp. lactis (strain IL1403) (Streptococcus lactis)).